Reading from the N-terminus, the 153-residue chain is D-aminoacyl-tRNA deacylase (153 aa).

Residues 140-141 carry the Gly-cisPro motif, important for rejection of L-amino acids motif; it reads GP.

The protein belongs to the DTD family. As to quaternary structure, homodimer.

It localises to the cytoplasm. The catalysed reaction is glycyl-tRNA(Ala) + H2O = tRNA(Ala) + glycine + H(+). The enzyme catalyses a D-aminoacyl-tRNA + H2O = a tRNA + a D-alpha-amino acid + H(+). Functionally, an aminoacyl-tRNA editing enzyme that deacylates mischarged D-aminoacyl-tRNAs. Also deacylates mischarged glycyl-tRNA(Ala), protecting cells against glycine mischarging by AlaRS. Acts via tRNA-based rather than protein-based catalysis; rejects L-amino acids rather than detecting D-amino acids in the active site. By recycling D-aminoacyl-tRNA to D-amino acids and free tRNA molecules, this enzyme counteracts the toxicity associated with the formation of D-aminoacyl-tRNA entities in vivo and helps enforce protein L-homochirality. The polypeptide is D-aminoacyl-tRNA deacylase (Trichodesmium erythraeum (strain IMS101)).